Reading from the N-terminus, the 604-residue chain is UvrABC system protein C (604 aa).

The 80-residue stretch at E10–I89 folds into the GIY-YIG domain. Residues S199–L234 form the UVR domain.

The protein belongs to the UvrC family. Interacts with UvrB in an incision complex.

It is found in the cytoplasm. Its function is as follows. The UvrABC repair system catalyzes the recognition and processing of DNA lesions. UvrC both incises the 5' and 3' sides of the lesion. The N-terminal half is responsible for the 3' incision and the C-terminal half is responsible for the 5' incision. The chain is UvrABC system protein C from Methanococcoides burtonii (strain DSM 6242 / NBRC 107633 / OCM 468 / ACE-M).